The following is a 614-amino-acid chain: Probable Xaa-Pro aminopeptidase P (614 aa).

D411, D422, E520, and E534 together coordinate Mn(2+).

The protein belongs to the peptidase M24B family. The cofactor is Mn(2+).

It carries out the reaction Release of any N-terminal amino acid, including proline, that is linked to proline, even from a dipeptide or tripeptide.. Functionally, catalyzes the removal of a penultimate prolyl residue from the N-termini of peptides. The polypeptide is Probable Xaa-Pro aminopeptidase P (AMPP) (Sordaria macrospora (strain ATCC MYA-333 / DSM 997 / K(L3346) / K-hell)).